The chain runs to 580 residues: 2-succinyl-5-enolpyruvyl-6-hydroxy-3-cyclohexene-1-carboxylate synthase (580 aa).

Belongs to the TPP enzyme family. MenD subfamily. In terms of assembly, homodimer. The cofactor is Mg(2+). Mn(2+) serves as cofactor. It depends on thiamine diphosphate as a cofactor.

The enzyme catalyses isochorismate + 2-oxoglutarate + H(+) = 5-enolpyruvoyl-6-hydroxy-2-succinyl-cyclohex-3-ene-1-carboxylate + CO2. Its pathway is quinol/quinone metabolism; 1,4-dihydroxy-2-naphthoate biosynthesis; 1,4-dihydroxy-2-naphthoate from chorismate: step 2/7. The protein operates within quinol/quinone metabolism; menaquinone biosynthesis. Its function is as follows. Catalyzes the thiamine diphosphate-dependent decarboxylation of 2-oxoglutarate and the subsequent addition of the resulting succinic semialdehyde-thiamine pyrophosphate anion to isochorismate to yield 2-succinyl-5-enolpyruvyl-6-hydroxy-3-cyclohexene-1-carboxylate (SEPHCHC). This is 2-succinyl-5-enolpyruvyl-6-hydroxy-3-cyclohexene-1-carboxylate synthase from Listeria welshimeri serovar 6b (strain ATCC 35897 / DSM 20650 / CCUG 15529 / CIP 8149 / NCTC 11857 / SLCC 5334 / V8).